The chain runs to 335 residues: Tryptophan--tRNA ligase (335 aa).

Residues 19 to 21 (QPS) and 28 to 29 (GN) each bind ATP. Residues 20-29 (PSSGMLHLGN) carry the 'HIGH' region motif. Residue aspartate 143 participates in L-tryptophan binding. ATP contacts are provided by residues 155 to 157 (GAD), isoleucine 192, and 201 to 205 (KMSKS). A 'KMSKS' region motif is present at residues 201–205 (KMSKS).

This sequence belongs to the class-I aminoacyl-tRNA synthetase family. Homodimer.

Its subcellular location is the cytoplasm. It catalyses the reaction tRNA(Trp) + L-tryptophan + ATP = L-tryptophyl-tRNA(Trp) + AMP + diphosphate + H(+). Its function is as follows. Catalyzes the attachment of tryptophan to tRNA(Trp). This is Tryptophan--tRNA ligase from Tropheryma whipplei (strain Twist) (Whipple's bacillus).